Consider the following 386-residue polypeptide: uncharacterized protein (386 aa).

2 helical membrane-spanning segments follow: residues 54 to 74 (AVLQMIDPPALVGCIAQAIVA) and 347 to 367 (LLGGIPLAGFFAAGEIGPIAG).

It to M.tuberculosis Rv0628c.

Its subcellular location is the cell membrane. This is an uncharacterized protein from Mycobacterium tuberculosis (strain CDC 1551 / Oshkosh).